We begin with the raw amino-acid sequence, 114 residues long: T cell receptor beta variable 3-1 (114 aa).

Positions 1-21 (MGCRLLCCVVFCLLQAGPLDT) are cleaved as a signal peptide. In terms of domain architecture, Ig-like spans 22–114 (AVSQTPKYLV…SAVYFCASSQ (93 aa)). An intrachain disulfide couples Cys-42 to Cys-110. Residue Asn-76 is glycosylated (N-linked (GlcNAc...) asparagine).

Alpha-beta TR is a heterodimer composed of an alpha and beta chain; disulfide-linked. The alpha-beta TR is associated with the transmembrane signaling CD3 coreceptor proteins to form the TR-CD3 (TcR or TCR). The assembly of alpha-beta TR heterodimers with CD3 occurs in the endoplasmic reticulum where a single alpha-beta TR heterodimer associates with one CD3D-CD3E heterodimer, one CD3G-CD3E heterodimer and one CD247 homodimer forming a stable octameric structure. CD3D-CD3E and CD3G-CD3E heterodimers preferentially associate with TR alpha and TR beta chains, respectively. The association of the CD247 homodimer is the last step of TcR assembly in the endoplasmic reticulum and is required for transport to the cell surface.

The protein localises to the cell membrane. V region of the variable domain of T cell receptor (TR) beta chain that participates in the antigen recognition. Alpha-beta T cell receptors are antigen specific receptors which are essential to the immune response and are present on the cell surface of T lymphocytes. Recognize peptide-major histocompatibility (MH) (pMH) complexes that are displayed by antigen presenting cells (APC), a prerequisite for efficient T cell adaptive immunity against pathogens. Binding of alpha-beta TR to pMH complex initiates TR-CD3 clustering on the cell surface and intracellular activation of LCK that phosphorylates the ITAM motifs of CD3G, CD3D, CD3E and CD247 enabling the recruitment of ZAP70. In turn ZAP70 phosphorylates LAT, which recruits numerous signaling molecules to form the LAT signalosome. The LAT signalosome propagates signal branching to three major signaling pathways, the calcium, the mitogen-activated protein kinase (MAPK) kinase and the nuclear factor NF-kappa-B (NF-kB) pathways, leading to the mobilization of transcription factors that are critical for gene expression and essential for T cell growth and differentiation. The T cell repertoire is generated in the thymus, by V-(D)-J rearrangement. This repertoire is then shaped by intrathymic selection events to generate a peripheral T cell pool of self-MH restricted, non-autoaggressive T cells. Post-thymic interaction of alpha-beta TR with the pMH complexes shapes TR structural and functional avidity. The protein is T cell receptor beta variable 3-1 of Homo sapiens (Human).